Reading from the N-terminus, the 358-residue chain is MSADAAAGAPLPRLCCLEKGPNGYGFHLHGEKGKLGQYIRLVEPGSPAEKAGLLAGDRLVEVNGENVEKETHQQVVSRIRAALNAVRLLVVDPETDEQLQKLGVQVREELLRAQETPGQAEPAAAAEAQGAGNENEPREADKSHPEQRKLRPRLCTMKKGPSGYGFNLHSDKSKPGQFIRSVDPDSPAEASGLRAQDRIVEVNGVCMEGKQHGDVVSAIRAGGDETKLLVVDRETDEFFKKCKVTPSQEHLNGPLPEPFTNGEIQKENSREALAEAASESPRPTLVRSASSDTSEELNSQDSPPKQDSTAPSSTSSSDPILDFNISLAMAKERAHQKRSSKRAPQMDWSKKNELFSNL.

At S2 the chain carries N-acetylserine. S2 and S46 each carry phosphoserine. Residues 14–94 (LCCLEKGPNG…AVRLLVVDPE (81 aa)) enclose the PDZ 1 domain. Over residues 114-134 (QETPGQAEPAAAAEAQGAGNE) the composition is skewed to low complexity. Disordered regions lie at residues 114–192 (QETP…EASG) and 269–358 (SREA…FSNL). Basic and acidic residues predominate over residues 135 to 149 (NEPREADKSHPEQRK). A PDZ 2 domain is found at 154–234 (LCTMKKGPSG…ETKLLVVDRE (81 aa)). A phosphoserine mark is found at S162, S269, S280, S290, and S291. Residues 287 to 306 (RSASSDTSEELNSQDSPPKQ) are compositionally biased toward polar residues. A Phosphothreonine modification is found at T293. A phosphoserine mark is found at S294, S299, and S302. Low complexity predominate over residues 307 to 319 (DSTAPSSTSSSDP). Basic and acidic residues predominate over residues 348-358 (WSKKNELFSNL).

Homodimer, and heterodimer with NHERF2. Binds the N-termini of EZR, RDX and MSN. Binds the C-termini of PDGFRA, PDGFRB, ADRB2, NOS2 and CFTR. Binds ARHGAP17, EPI64, RACK1, OPRK1, GNAQ, CTNNB1 and PLCB3. Binds PDZK1. Interacts with CLCN3. Binds the C-terminus of PAG1. In resting T-cells, part of a PAG1-NHERF1-MSN complex which is disrupted upon TCR activation. Forms a complex with CFTR and SLC4A7. Forms a complex with SLC4A7 and ATP6V1B1. Interacts with TRPC4 (via the PDZ-binding domain). Directly interacts with HTR4. Interacts (via the PDZ 1 domain) with PODXL (via the C-terminal PDZ-binding motif DTHL); interaction is not detected in glomerular epithelium cells. Interacts (via the PDZ 1 domain) with PODXL (via the C-terminal PDZ-binding motif DTHL); the interaction take place early in the secretory pathway and is necessary for its apical membrane sorting. Interacts with SLC26A3. Interacts with MCC. Interacts with SLC34A1. Interacts (via the PDZ domains) with SLC26A6 isoform 4 and isoform 5. Interacts (via PDZ domains) with ACE2 (via PDZ-binding motif); the interaction may enhance ACE2 membrane residence. In terms of processing, phosphorylated on serine residues.

The protein localises to the cytoplasm. It localises to the apical cell membrane. Its subcellular location is the endomembrane system. The protein resides in the cell projection. It is found in the filopodium. The protein localises to the ruffle. It localises to the microvillus. Its function is as follows. Scaffold protein that connects plasma membrane proteins with members of the ezrin/moesin/radixin family and thereby helps to link them to the actin cytoskeleton and to regulate their surface expression. Necessary for recycling of internalized ADRB2. Was first known to play a role in the regulation of the activity and subcellular location of SLC9A3. Necessary for cAMP-mediated phosphorylation and inhibition of SLC9A3. Involved in sperm capacitation. May participate in the regulation of the chloride and bicarbonate homeostasis in spermatozoa. May enhance Wnt signaling. May participate in HTR4 targeting to microvilli. Involved in the regulation of phosphate reabsorption in the renal proximal tubules. The polypeptide is Na(+)/H(+) exchange regulatory cofactor NHE-RF1 (NHERF1) (Macaca fascicularis (Crab-eating macaque)).